A 202-amino-acid chain; its full sequence is Small ribosomal subunit protein uS4 (202 aa).

Residues 91–168 (SMLSSVLYNS…QKVPDYLEVD (78 aa)) enclose the S4 RNA-binding domain.

It belongs to the universal ribosomal protein uS4 family. In terms of assembly, part of the 30S ribosomal subunit. Contacts protein S5. The interaction surface between S4 and S5 is involved in control of translational fidelity.

In terms of biological role, one of the primary rRNA binding proteins, it binds directly to 16S rRNA where it nucleates assembly of the body of the 30S subunit. Functionally, with S5 and S12 plays an important role in translational accuracy. The chain is Small ribosomal subunit protein uS4 from Ehrlichia ruminantium (strain Welgevonden).